The following is a 239-amino-acid chain: Cytochrome c oxidase subunit 2 (239 aa).

Residues Met-1–His-26 lie on the Mitochondrial intermembrane side of the membrane. Residues Val-27–Ser-48 form a helical membrane-spanning segment. The Mitochondrial matrix portion of the chain corresponds to Lys-49–Glu-62. A helical transmembrane segment spans residues Thr-63–Lys-82. Over Leu-83–Arg-239 the chain is Mitochondrial intermembrane. 6 residues coordinate Cu cation: His-161, Cys-196, Glu-198, Cys-200, His-204, and Met-207. Glu-198 provides a ligand contact to Mg(2+).

This sequence belongs to the cytochrome c oxidase subunit 2 family. In terms of assembly, component of the cytochrome c oxidase (complex IV, CIV), a multisubunit enzyme composed of a catalytic core of 3 subunits and several supernumerary subunits. The complex exists as a monomer or a dimer and forms supercomplexes (SCs) in the inner mitochondrial membrane with ubiquinol-cytochrome c oxidoreductase (cytochrome b-c1 complex, complex III, CIII). The cofactor is Cu cation.

It localises to the mitochondrion inner membrane. It carries out the reaction 4 Fe(II)-[cytochrome c] + O2 + 8 H(+)(in) = 4 Fe(III)-[cytochrome c] + 2 H2O + 4 H(+)(out). Functionally, component of the cytochrome c oxidase, the last enzyme in the mitochondrial electron transport chain which drives oxidative phosphorylation. The respiratory chain contains 3 multisubunit complexes succinate dehydrogenase (complex II, CII), ubiquinol-cytochrome c oxidoreductase (cytochrome b-c1 complex, complex III, CIII) and cytochrome c oxidase (complex IV, CIV), that cooperate to transfer electrons derived from NADH and succinate to molecular oxygen, creating an electrochemical gradient over the inner membrane that drives transmembrane transport and the ATP synthase. Cytochrome c oxidase is the component of the respiratory chain that catalyzes the reduction of oxygen to water. Electrons originating from reduced cytochrome c in the intermembrane space (IMS) are transferred via the dinuclear copper A center (CU(A)) of subunit 2 and heme A of subunit 1 to the active site in subunit 1, a binuclear center (BNC) formed by heme A3 and copper B (CU(B)). The BNC reduces molecular oxygen to 2 water molecules using 4 electrons from cytochrome c in the IMS and 4 protons from the mitochondrial matrix. The protein is Cytochrome c oxidase subunit 2 (COII) of Branchiostoma lanceolatum (Common lancelet).